The sequence spans 529 residues: ATP synthase F(1) complex catalytic subunit beta, mitochondrial (529 aa).

Residues 1–46 constitute a mitochondrion transit peptide; the sequence is MLSLVGRVASASASGALRGLSPSAALPQAQLLLRAAPAGVHPARDY. Serine 106 carries an O-linked (GlcNAc) serine glycan. 3 positions are modified to N6-acetyllysine; alternate: lysine 124, lysine 133, and lysine 161. 3 positions are modified to N6-succinyllysine; alternate: lysine 124, lysine 133, and lysine 161. N6-acetyllysine is present on lysine 198. Residues glycine 209, valine 210, glycine 211, lysine 212, threonine 213, and valine 214 each coordinate ADP. Glycine 209 contributes to the ATP binding site. Glycine 209, valine 210, glycine 211, lysine 212, and threonine 213 together coordinate phosphate. 4 residues coordinate ATP: glycine 211, lysine 212, threonine 213, and valine 214. Threonine 213 contacts Mg(2+). A Mg(2+)-binding site is contributed by glutamate 238. Arginine 239 contacts ATP. 2 positions are modified to N6-acetyllysine; alternate: lysine 259 and lysine 264. N6-succinyllysine; alternate is present on residues lysine 259 and lysine 264. Threonine 312 carries the phosphothreonine modification. Lysine 426 carries the N6-acetyllysine modification. The residue at position 433 (serine 433) is a Phosphoserine. N6-acetyllysine is present on residues lysine 480 and lysine 485. Lysine 522 bears the N6-acetyllysine; alternate mark. N6-succinyllysine; alternate is present on lysine 522. Position 529 is a phosphoserine (serine 529).

It belongs to the ATPase alpha/beta chains family. Homotrimer. Component of the ATP synthase complex composed at least of ATP5F1A/subunit alpha, ATP5F1B/subunit beta, ATP5MC1/subunit c (homooctomer), MT-ATP6/subunit a, MT-ATP8/subunit 8, ATP5ME/subunit e, ATP5MF/subunit f, ATP5MG/subunit g, ATP5MK/subunit k, ATP5MJ/subunit j, ATP5F1C/subunit gamma, ATP5F1D/subunit delta, ATP5F1E/subunit epsilon, ATP5PF/subunit F6, ATP5PB/subunit b, ATP5PD/subunit d, ATP5PO/subunit OSCP. ATP synthase complex consists of a soluble F(1) head domain (subunits alpha(3) and beta(3)) - the catalytic core - and a membrane F(0) domain - the membrane proton channel (subunits c, a, 8, e, f, g, k and j). These two domains are linked by a central stalk (subunits gamma, delta, and epsilon) rotating inside the F1 region and a stationary peripheral stalk (subunits F6, b, d, and OSCP). Interacts with PPIF. Interacts with BCL2L1 isoform BCL-X(L); the interaction mediates the association of BCL2L1 isoform BCL-X(L) with the mitochondrial membrane F(1)F(0) ATP synthase and enhances neurons metabolic efficiency. Interacts with CLN5 and PPT1. Interacts with S100A1; this interaction increases F1-ATPase activity. Interacts with MTLN. Interacts with TTC5/STRAP; the interaction results in decreased mitochondrial ATP production. In terms of processing, acetylation of Lys-133 is observed in liver mitochondria from fasted mice but not from fed mice.

It localises to the mitochondrion inner membrane. It carries out the reaction ATP + H2O + 4 H(+)(in) = ADP + phosphate + 5 H(+)(out). Its function is as follows. Catalytic subunit beta, of the mitochondrial membrane ATP synthase complex (F(1)F(0) ATP synthase or Complex V) that produces ATP from ADP in the presence of a proton gradient across the membrane which is generated by electron transport complexes of the respiratory chain. ATP synthase complex consist of a soluble F(1) head domain - the catalytic core - and a membrane F(1) domain - the membrane proton channel. These two domains are linked by a central stalk rotating inside the F(1) region and a stationary peripheral stalk. During catalysis, ATP synthesis in the catalytic domain of F(1) is coupled via a rotary mechanism of the central stalk subunits to proton translocation. In vivo, can only synthesize ATP although its ATP hydrolase activity can be activated artificially in vitro. With the subunit alpha (ATP5F1A), forms the catalytic core in the F(1) domain. The protein is ATP synthase F(1) complex catalytic subunit beta, mitochondrial of Mus musculus (Mouse).